Reading from the N-terminus, the 398-residue chain is Tear acid lipase-like protein (398 aa).

Positions Met1–Cys19 are cleaved as a signal peptide. Ser170 functions as the Nucleophile in the catalytic mechanism. A disulfide bond links Cys243 and Cys252. N-linked (GlcNAc...) asparagine glycosylation is present at Asn268. Active-site charge relay system residues include Asp340 and His369.

Belongs to the AB hydrolase superfamily. Lipase family. Monomer. N-glycosylated. In terms of tissue distribution, expressed in female lacrimal gland acinar cells from where it is secreted into tears (at protein level).

Its subcellular location is the secreted. Its function is as follows. Female-specific protein which lacks detectable lipase activity against a range of substrates. Binds the hydrophobic lipid 1-aminoanthracene with high affinity. In Mesocricetus auratus (Golden hamster), this protein is Tear acid lipase-like protein.